The following is a 349-amino-acid chain: MDTTFKAAAVQAEPVWMDAAATADKTVTLVAKAAAAGAQLVAFPELWIPGYPGFMLTHNQTETLPFIIKYRKQAIAADGPEIEKIRCAAQEHNIALSFGYSERAGRTLYMSQMLIDADGITKIRRRKLKPTRFERELFGEGDGSDLQVAQTSVGRVGALNCAENLQSLNKFALAAEGEQIHISAWPFTLGSPVLVGDSIGAINQVYAAETGTFVLMSTQVVGPTGIAAFEIEDRYNPNQYLGGGYARIYGPDMQLKSKSLSPTEEGIVYAEIDLSMLEAAKYSLDPTGHYSRPDVFSVSINRQRQPAVSEVIDSNGDEDPRAACEPDEGDREVVISTAIGVLPRYCGHS.

Residues 5 to 274 form the CN hydrolase domain; that stretch reads FKAAAVQAEP…EGIVYAEIDL (270 aa). The active-site Proton acceptor is the Glu45. Catalysis depends on Lys127, which acts as the Proton donor. Cys161 acts as the Nucleophile in catalysis.

It belongs to the carbon-nitrogen hydrolase superfamily. Nitrilase family. As to quaternary structure, homodimer.

The enzyme catalyses a nitrile + 2 H2O = a carboxylate + NH4(+). Its function is as follows. Specific for the herbicide bromoxynil (3,5-dibromo-4-hydroxybenzonitrile); converts it to its metabolite 3,5-dibromo-4-hydroxybenzoic acid. This chain is Nitrilase, bromoxynil-specific (bxn), found in Klebsiella pneumoniae subsp. ozaenae.